The following is a 565-amino-acid chain: uncharacterized protein (565 aa).

13 helical membrane-spanning segments follow: residues 8–28 (ISFIAAMLIVIGSSIGAGIFF), 43–63 (LAIFNWLVASVAVIAMALALI), 95–115 (MTYLYLPLTFFFMPLYFICSI), 137–157 (WLIWLALALIITTYFLTIPPL), 167–187 (MVVSAVKFIPLVFVPIIGFIV), 227–247 (FTGIGAGMGSFISIAAIFFAY), 268–288 (WALFLGLLITTLFYLILAVAL), 314–334 (IVFGVVNLMIGIGVLGIINGF), 367–387 (VVGVIYCLVLSLTVQVLFTVI), 424–444 (ATWTSLFTFAFIACAIFGAIV), 460–480 (FLPAAWIAVVVNCISVFVTII), 482–502 (PFINLFLLFGYDETVAHTVLG), and 516–536 (VMLIVVLVFFAIISFLPVYVE).

The protein to M.pneumoniae MPN_095 and MPN_096.

The protein localises to the cell membrane. This is an uncharacterized protein from Mycoplasma pneumoniae (strain ATCC 29342 / M129 / Subtype 1) (Mycoplasmoides pneumoniae).